The following is a 317-amino-acid chain: Universal stress protein Mb2019 (317 aa).

ATP contacts are provided by residues glycine 13, glycine 128 to alanine 134, serine 142 to valine 143, glycine 175, aspartate 208, glycine 277 to glycine 283, and serine 291 to serine 293.

The protein belongs to the universal stress protein A family.

The sequence is that of Universal stress protein Mb2019 from Mycobacterium bovis (strain ATCC BAA-935 / AF2122/97).